The primary structure comprises 402 residues: Protein prenyltransferase alpha subunit repeat-containing protein 1 (402 aa).

Ala-2 is modified (N-acetylalanine). 4 PFTA repeats span residues 87-120 (LIDVTCTLLLLNPDFTTAWNVRKELILSGTLNPI), 122-155 (DLHLGKLALTKFPKSPETWIHRRWVLQQLIQETS), 180-213 (EMEVCGEAAGRYPSNYNAWSHRIWVLQHLAKLDV), and 219-252 (ELSSTKHWASMHVSDHSGFHYRQFLLKSLISQTV). Residues 263–282 (LRSEPALVPPKDEEAAVSTE) form a disordered region. Residues 295–328 (EVEFSTDLIDSYPGHETLWCHRRHIFYLQHHLNA) form a PFTA 5 repeat.

It belongs to the protein prenyltransferase subunit alpha family.

The sequence is that of Protein prenyltransferase alpha subunit repeat-containing protein 1 (PTAR1) from Homo sapiens (Human).